Reading from the N-terminus, the 76-residue chain is Histone H2A (76 aa).

A disordered region spans residues Met1–Gly23. Residue Ser2 is modified to N-acetylserine; in acipensins. N-acetylserine; in histone H2A is present on Ser2. The residue at position 2 (Ser2) is a Phosphoserine; in histone H2A. Lys6 carries the post-translational modification N6-(2-hydroxyisobutyryl)lysine. Lys6 carries the post-translational modification N6-acetyllysine; in histone H2A. Positions Thr7–Ser19 are enriched in basic residues. Lys10 carries the N6-(2-hydroxyisobutyryl)lysine; alternate modification. Position 10 is an N6-lactoyllysine; alternate (Lys10). Lys10 bears the N6-succinyllysine mark. Residues Lys14 and Lys16 each participate in a glycyl lysine isopeptide (Lys-Gly) (interchain with G-Cter in ubiquitin); in histone H2A cross-link. N6-(2-hydroxyisobutyryl)lysine; alternate is present on Lys37. N6-(2-hydroxyisobutyryl)lysine occurs at positions 65 and 66.

This sequence belongs to the histone H2A family. As to quaternary structure, the nucleosome is a histone octamer containing two molecules each of H2A, H2B, H3 and H4 assembled in one H3-H4 heterotetramer and two H2A-H2B heterodimers. The octamer wraps approximately 147 bp of DNA. In terms of processing, phosphorylation on Ser-2 is enhanced during mitosis. Phosphorylation on Ser-2 directly represses transcription.

Its subcellular location is the nucleus. It localises to the chromosome. Core component of nucleosome. Nucleosomes wrap and compact DNA into chromatin, limiting DNA accessibility to the cellular machineries which require DNA as a template. Histones thereby play a central role in transcription regulation, DNA repair, DNA replication and chromosomal stability. DNA accessibility is regulated via a complex set of post-translational modifications of histones, also called histone code, and nucleosome remodeling. Its function is as follows. Acipensins are antimicrobial peptides. Acipensins 1 and 2 have antibacterial activity against Gram-positive bacteria L.monocytogenes EGD (MIC are 1.1 uM and 1.0 uM, respectively) and S.aureus ATCC 33591 (MIC are 0.9 uM and 0.6 uM, respectively), against Gram-negative bacterium E.coli ML-35p (MIC are 0.7 uM and 0.3 uM, respectively) and antifungal activity against C.albicans 820 (MIC are 1.0 uM and 0.9 uM, respectively). Acipensin 6 has antibacterial activity against Gram-negative bacterium E.coli ML-35p (MIC=2.5 uM). Antimicrobial activity is reduced by high ionic strength. Acipensins 1, 2 and 6 have no hemolytic (up to 40 uM) or cytotoxic (up to 20 uM) effects on human cells in vitro. This Acipenser gueldenstaedtii (Russian sturgeon) protein is Histone H2A.